Reading from the N-terminus, the 107-residue chain is Parvalbumin beta (107 aa).

An N-acetylserine modification is found at Ser1. 2 EF-hand domains span residues 37–72 (KSLD…FSPS) and 76–107 (LTDA…MIKA). Ca(2+) is bound by residues Asp50, Asp52, Ser54, Phe56, Glu58, Glu61, Asp89, Asp91, Asp93, Met95, and Glu100.

The protein belongs to the parvalbumin family.

Functionally, in muscle, parvalbumin is thought to be involved in relaxation after contraction. It binds two calcium ions. In Esox lucius (Northern pike), this protein is Parvalbumin beta.